Consider the following 278-residue polypeptide: Cytoplasmic envelopment protein 1 (278 aa).

It belongs to the herpesviridae cytoplasmic envelopment protein 1 family. In terms of assembly, interacts with BSRF1 tegument protein; the BBRF2-BSRF1 complexes oligomerize and might play a role in tethering the viral nucleocapsids to the host Golgi membrane during secondary envelopment.

The protein localises to the virion. Its subcellular location is the virion tegument. It is found in the host cytoplasm. The protein resides in the host Golgi apparatus. Functionally, plays a critical role in cytoplasmic virus egress. Participates in the final step of tegumentation and envelope acquisition within the host cytoplasm. The chain is Cytoplasmic envelopment protein 1 from Homo sapiens (Human).